A 296-amino-acid polypeptide reads, in one-letter code: Homoserine kinase (296 aa).

An ATP-binding site is contributed by 84 to 94 (PLARGLGSSSS).

This sequence belongs to the GHMP kinase family. Homoserine kinase subfamily.

Its subcellular location is the cytoplasm. The catalysed reaction is L-homoserine + ATP = O-phospho-L-homoserine + ADP + H(+). Its pathway is amino-acid biosynthesis; L-threonine biosynthesis; L-threonine from L-aspartate: step 4/5. In terms of biological role, catalyzes the ATP-dependent phosphorylation of L-homoserine to L-homoserine phosphate. In Lactococcus lactis subsp. cremoris (Streptococcus cremoris), this protein is Homoserine kinase (thrB).